We begin with the raw amino-acid sequence, 100 residues long: EKC/KEOPS complex subunit GON7 (100 aa).

Met-1 carries the N-acetylmethionine modification. The tract at residues 61-100 (AAAPDEDLDGDDEDDAEDENNIDNRTNFDGPSAKRPKTPS) is disordered. Acidic residues predominate over residues 64 to 81 (PDEDLDGDDEDDAEDENN).

As to quaternary structure, component of the EKC/KEOPS complex composed of at least GON7, TP53RK, TPRKB, OSGEP and LAGE3; the whole complex dimerizes.

The protein resides in the nucleus. Component of the EKC/KEOPS complex that is required for the formation of a threonylcarbamoyl group on adenosine at position 37 (t(6)A37) in tRNAs that read codons beginning with adenine. The complex is probably involved in the transfer of the threonylcarbamoyl moiety of threonylcarbamoyl-AMP (TC-AMP) to the N6 group of A37. GON7 plays a supporting role to the catalytic subunit OSGEP in the complex. This is EKC/KEOPS complex subunit GON7 from Homo sapiens (Human).